A 33-amino-acid polypeptide reads, in one-letter code: Photosystem II reaction center protein Psb30 (33 aa).

Residues 5-25 (LITQLASLILIVASGPIVIGL) form a helical membrane-spanning segment.

The protein belongs to the Psb30/Ycf12 family. PSII is composed of 1 copy each of membrane proteins PsbA, PsbB, PsbC, PsbD, PsbE, PsbF, PsbH, PsbI, PsbJ, PsbK, PsbL, PsbM, PsbT, PsbX, PsbY, PsbZ, Psb30/Ycf12, peripheral proteins of the oxygen-evolving complex and a large number of cofactors. It forms dimeric complexes.

It is found in the plastid. The protein localises to the chloroplast thylakoid membrane. Its function is as follows. A core subunit of photosystem II (PSII), probably helps stabilize the reaction center. The sequence is that of Photosystem II reaction center protein Psb30 from Lepocinclis buetschlii.